Here is an 86-residue protein sequence, read N- to C-terminus: Thioredoxin (86 aa).

Active-site nucleophile residues include Cys-15 and Cys-18. Cysteines 15 and 18 form a disulfide.

Belongs to the glutaredoxin family.

Functionally, does not function as a glutathione-disulfide oxidoreductase in the presence of glutathione and glutathione reductase. Has low thioredoxin activity in vitro. The chain is Thioredoxin from Methanocaldococcus jannaschii (strain ATCC 43067 / DSM 2661 / JAL-1 / JCM 10045 / NBRC 100440) (Methanococcus jannaschii).